We begin with the raw amino-acid sequence, 336 residues long: tRNA dimethylallyltransferase (336 aa).

Residue 19–26 (GPTASGKT) coordinates ATP. Residue 21 to 26 (TASGKT) coordinates substrate.

Belongs to the IPP transferase family. Monomer. Mg(2+) is required as a cofactor.

It carries out the reaction adenosine(37) in tRNA + dimethylallyl diphosphate = N(6)-dimethylallyladenosine(37) in tRNA + diphosphate. Its function is as follows. Catalyzes the transfer of a dimethylallyl group onto the adenine at position 37 in tRNAs that read codons beginning with uridine, leading to the formation of N6-(dimethylallyl)adenosine (i(6)A). This chain is tRNA dimethylallyltransferase, found in Bifidobacterium adolescentis (strain ATCC 15703 / DSM 20083 / NCTC 11814 / E194a).